The chain runs to 401 residues: Imidazolonepropionase (401 aa).

Residues H66 and H68 each coordinate Fe(3+). Zn(2+)-binding residues include H66 and H68. 4-imidazolone-5-propanoate-binding residues include R75, Y138, and H171. Y138 is a binding site for N-formimidoyl-L-glutamate. A Fe(3+)-binding site is contributed by H236. H236 serves as a coordination point for Zn(2+). Q239 contacts 4-imidazolone-5-propanoate. Residue D311 coordinates Fe(3+). D311 is a Zn(2+) binding site. Residues N313 and G315 each coordinate N-formimidoyl-L-glutamate. T316 is a binding site for 4-imidazolone-5-propanoate.

This sequence belongs to the metallo-dependent hydrolases superfamily. HutI family. Zn(2+) is required as a cofactor. Fe(3+) serves as cofactor.

It localises to the cytoplasm. It catalyses the reaction 4-imidazolone-5-propanoate + H2O = N-formimidoyl-L-glutamate. Its pathway is amino-acid degradation; L-histidine degradation into L-glutamate; N-formimidoyl-L-glutamate from L-histidine: step 3/3. Catalyzes the hydrolytic cleavage of the carbon-nitrogen bond in imidazolone-5-propanoate to yield N-formimidoyl-L-glutamate. It is the third step in the universal histidine degradation pathway. The polypeptide is Imidazolonepropionase (Acinetobacter baumannii (strain AB0057)).